A 97-amino-acid polypeptide reads, in one-letter code: MAASQQEIIAGLAEIIEEVTGIEPSEVTPEKSFVDDLDIDSLSMVEIAVQTEDKYGVKIPDEDLAGLRTVGDVVAYIQKLEEENPEAAAALREKFAE.

Residues 3-81 (ASQQEIIAGL…DVVAYIQKLE (79 aa)) enclose the Carrier domain. Ser41 is subject to O-(pantetheine 4'-phosphoryl)serine.

Belongs to the acyl carrier protein (ACP) family. Post-translationally, 4'-phosphopantetheine is transferred from CoA to a specific serine of apo-AcpM.

Its subcellular location is the cytoplasm. In terms of biological role, acyl carrier protein involved in meromycolate extension. This chain is Meromycolate extension acyl carrier protein (acpM), found in Mycolicibacterium aurum (Mycobacterium aurum).